Consider the following 426-residue polypeptide: Neuromedin-U receptor 1 (426 aa).

Topologically, residues 1–65 (MTPLCLNCSV…QTELFMPICA (65 aa)) are extracellular. Asn-7, Asn-27, and Asn-41 each carry an N-linked (GlcNAc...) asparagine glycan. The chain crosses the membrane as a helical span at residues 66–86 (TYLLIFVVGAVGNGLTCLVIL). Residues 87 to 97 (RHKAMRTPTNY) lie on the Cytoplasmic side of the membrane. The helical transmembrane segment at 98–118 (YLFSLAVSDLLVLLVGLPLEL) threads the bilayer. The Extracellular portion of the chain corresponds to 119–138 (YEMWHNYPFLLGVGGCYFRT). A disulfide bridge links Cys-134 with Cys-219. Residues 139-161 (LLFEMVCLASVLNVTALSVERYV) traverse the membrane as a helical segment. Residues 162 to 181 (AVVHPLQARSMVTRAHVRRV) lie on the Cytoplasmic side of the membrane. Residues 182 to 202 (LGAVWGLAMLCSLPNTSLHGI) traverse the membrane as a helical segment. The Extracellular portion of the chain corresponds to 203 to 235 (RQLHVPCRGPVPDSAVCMLVRPRALYNMVVQTT). A helical transmembrane segment spans residues 236-256 (ALLFFCLPMAIMSVLYLLIGL). Topologically, residues 257–294 (RLRRERLLLMQEAKGRGSAAARSRYTCRLQQHDRGRRQ) are cytoplasmic. Residues 295-315 (VTKMLFVLVVVFGICWAPFHA) form a helical membrane-spanning segment. The Extracellular segment spans residues 316 to 338 (DRVMWSVVSQWTDGLHLAFQHVH). A helical transmembrane segment spans residues 339 to 359 (VISGIFFYLGSAANPVLYSLM). Topologically, residues 360-426 (SSRFRETFQE…PEAQQETDPS (67 aa)) are cytoplasmic.

Belongs to the G-protein coupled receptor 1 family. As to expression, expressed in greatest abundance in peripheral organs, particularly in elements of the gastrointestinal and urogenital systems with highest levels in testes. In central nervous system structures express levels are much lower than those seen in peripheral organs. Within the CNS, has been detected in highest abundance in the cerebellum, dorsal root ganglia, hippocampus, and spinal cord.

Its subcellular location is the cell membrane. Receptor for the neuromedin-U and neuromedin-S neuropeptides. The sequence is that of Neuromedin-U receptor 1 (NMUR1) from Homo sapiens (Human).